Reading from the N-terminus, the 273-residue chain is Outer surface protein A (273 aa).

The signal sequence occupies residues 1-16 (MKKYLLGIGLILALIA). C17 carries N-palmitoyl cysteine lipidation. Residue C17 is the site of S-diacylglycerol cysteine attachment.

It belongs to the OspA lipoprotein family.

The protein resides in the cell outer membrane. Its subcellular location is the cell surface. The polypeptide is Outer surface protein A (Borreliella burgdorferi (Lyme disease spirochete)).